Here is a 1050-residue protein sequence, read N- to C-terminus: Elongation factor 3 (1050 aa).

2 residues coordinate ADP: Val-43 and His-45. An HEAT 1 repeat occupies 46–83; sequence DVPVEFFEDLKKQIQSKDAKVSLAALDAYKHIASTNGL. Residue Ser-86 participates in ADP binding. HEAT repeat units lie at residues 89 to 126, 127 to 165, 169 to 206, 208 to 244, 245 to 282, and 288 to 326; these read PYVV…AITP, TAVK…TAKA, LRMP…TIDN, DIEK…EVTM, ATLS…LVED, and PFMD…VGAV. ADP-binding residues include Thr-395, His-399, and Glu-400. 2 ABC transporter domains span residues 429–646 and 672–998; these read DEGE…YYEL and VKVS…KKDD. Asn-708, Glu-927, Asn-930, and His-956 together coordinate ADP. A disordered region spans residues 980–1050; it reads GHNWVQGQGS…DAYVSSDEEF (71 aa). The segment covering 1013–1037 has biased composition (basic residues); that stretch reads AAKKKKKLSSAELRKKKKERMKKKK.

The protein belongs to the ABC transporter superfamily. ABCF family. EF3 subfamily. In terms of assembly, monomer.

The protein localises to the cytoplasm. It carries out the reaction ATP + H2O = ADP + phosphate + H(+). The protein operates within protein biosynthesis; polypeptide chain elongation. In terms of biological role, ribosome-dependent ATPase that functions in cytoplasmic translation elongation. Required for the ATP-dependent release of deacylated tRNA from the ribosomal E-site during protein biosynthesis. Stimulates the eEF1A-dependent binding of aminoacyl-tRNA to the ribosomal A-site, which has reduced affinity for tRNA as long as the E-site is occupied. Assists translation termination by stimulating the release of nascent protein from the ribosome by release factors. The chain is Elongation factor 3 (CEF3) from Candida albicans (strain SC5314 / ATCC MYA-2876) (Yeast).